The following is a 593-amino-acid chain: Phosphoinositide phosphatase SAC6 (593 aa).

One can recognise an SAC domain in the interval 128 to 456; sequence LSVAERTTGL…GDDISIQYSG (329 aa). A Phosphatase catalytic core motif is present at residues 391 to 402; that stretch reads RTNCIDCLDRTN. Transmembrane regions (helical) follow at residues 526–546 and 555–575; these read AVAN…FATM and YKHL…AALV.

In terms of tissue distribution, predominantly expressed in flowers.

It localises to the endoplasmic reticulum membrane. Its function is as follows. Phosphoinositide phosphatase that hydrolyzes PtdIns(3)P and PtdIns(4)P. Involved in priming for different defense responses. This Arabidopsis thaliana (Mouse-ear cress) protein is Phosphoinositide phosphatase SAC6 (SAC6).